The primary structure comprises 120 residues: NAD(P)H-quinone oxidoreductase subunit 3, chloroplastic (120 aa).

3 consecutive transmembrane segments (helical) span residues 9-29 (IFWAFLIISIFIPILAFTISG), 64-84 (MFALVFVVFDVETVFLYPWAM), and 88-108 (VLGISVFIEALIFVLILIVGS).

It belongs to the complex I subunit 3 family. NDH is composed of at least 16 different subunits, 5 of which are encoded in the nucleus.

The protein resides in the plastid. It localises to the chloroplast thylakoid membrane. It catalyses the reaction a plastoquinone + NADH + (n+1) H(+)(in) = a plastoquinol + NAD(+) + n H(+)(out). The catalysed reaction is a plastoquinone + NADPH + (n+1) H(+)(in) = a plastoquinol + NADP(+) + n H(+)(out). Functionally, NDH shuttles electrons from NAD(P)H:plastoquinone, via FMN and iron-sulfur (Fe-S) centers, to quinones in the photosynthetic chain and possibly in a chloroplast respiratory chain. The immediate electron acceptor for the enzyme in this species is believed to be plastoquinone. Couples the redox reaction to proton translocation, and thus conserves the redox energy in a proton gradient. In Lotus japonicus (Lotus corniculatus var. japonicus), this protein is NAD(P)H-quinone oxidoreductase subunit 3, chloroplastic.